A 458-amino-acid polypeptide reads, in one-letter code: UDP-N-acetylmuramate--L-alanine ligase (458 aa).

115–121 (GSHGKTT) lines the ATP pocket.

Belongs to the MurCDEF family.

It localises to the cytoplasm. It carries out the reaction UDP-N-acetyl-alpha-D-muramate + L-alanine + ATP = UDP-N-acetyl-alpha-D-muramoyl-L-alanine + ADP + phosphate + H(+). The protein operates within cell wall biogenesis; peptidoglycan biosynthesis. In terms of biological role, cell wall formation. This chain is UDP-N-acetylmuramate--L-alanine ligase, found in Anaeromyxobacter sp. (strain Fw109-5).